Consider the following 525-residue polypeptide: GMP synthase [glutamine-hydrolyzing] (525 aa).

The Glutamine amidotransferase type-1 domain occupies Arg7 to Ser207. Catalysis depends on Cys84, which acts as the Nucleophile. Catalysis depends on residues His181 and Glu183. The 193-residue stretch at Trp208–Arg400 folds into the GMPS ATP-PPase domain. Ser235 to Leu241 provides a ligand contact to ATP.

Homodimer.

The enzyme catalyses XMP + L-glutamine + ATP + H2O = GMP + L-glutamate + AMP + diphosphate + 2 H(+). The protein operates within purine metabolism; GMP biosynthesis; GMP from XMP (L-Gln route): step 1/1. Catalyzes the synthesis of GMP from XMP. The chain is GMP synthase [glutamine-hydrolyzing] from Blochmanniella pennsylvanica (strain BPEN).